We begin with the raw amino-acid sequence, 278 residues long: Urease accessory protein UreD (278 aa).

Belongs to the UreD family. As to quaternary structure, ureD, UreF and UreG form a complex that acts as a GTP-hydrolysis-dependent molecular chaperone, activating the urease apoprotein by helping to assemble the nickel containing metallocenter of UreC. The UreE protein probably delivers the nickel.

The protein localises to the cytoplasm. In terms of biological role, required for maturation of urease via the functional incorporation of the urease nickel metallocenter. This is Urease accessory protein UreD from Escherichia coli.